The primary structure comprises 266 residues: UPF0294 protein YafD (266 aa).

The protein belongs to the UPF0294 family.

Its subcellular location is the cytoplasm. In Salmonella newport (strain SL254), this protein is UPF0294 protein YafD.